A 309-amino-acid polypeptide reads, in one-letter code: Taste receptor type 2 member 31 (309 aa).

The Extracellular portion of the chain corresponds to 1 to 2; sequence MT. Residues 3-23 form a helical membrane-spanning segment; the sequence is TFIPIIFSSLVMVMFVTGNFA. At 24–55 the chain is on the cytoplasmic side; sequence NGFIALVNSIESVKRQKISYADQILTALAVSR. The chain crosses the membrane as a helical span at residues 56 to 76; that stretch reads IGLLWVLLLNWYSTVLNPAFY. Topologically, residues 77-100 are extracellular; it reads SVEVRTTAYNVWAVTGHFSNWLAT. Residues 101–121 form a helical membrane-spanning segment; it reads SLSIFYLLKIANFSNLIFLHL. Residues 122–126 are Cytoplasmic-facing; it reads KRRVK. The chain crosses the membrane as a helical span at residues 127–147; that stretch reads SVILVMLLGPLLFLACQLFVI. Over 148-181 the chain is Extracellular; the sequence is NMKEIVQTKEYEGNXTWKIKLRSAVYLSDATVTT. Asn161 is a glycosylation site (N-linked (GlcNAc...) asparagine). A helical transmembrane segment spans residues 182-202; it reads LGNLVPFTLTLLCFLLLICSL. Over 203–229 the chain is Cytoplasmic; that stretch reads CKHLKKMQLHGKGSQDPSMKVHIKALQ. Residues 230–250 form a helical membrane-spanning segment; sequence TVTSFLLLCAIYFLSIMISVW. The Extracellular segment spans residues 251–259; the sequence is SLGSLKNKP. Residues 260-280 form a helical membrane-spanning segment; it reads VFMFCKAMRFSYPSIHPFILI. Topologically, residues 281–309 are cytoplasmic; that stretch reads WGNKKLKQTFLSVLQQVRYWVKGEKPSSP.

It belongs to the G-protein coupled receptor T2R family.

The protein resides in the membrane. In terms of biological role, receptor that may play a role in the perception of bitterness and is gustducin-linked. May play a role in sensing the chemical composition of the gastrointestinal content. The activity of this receptor may stimulate alpha gustducin, mediate PLC-beta-2 activation and lead to the gating of TRPM5. This is Taste receptor type 2 member 31 (TAS2R31) from Gorilla gorilla gorilla (Western lowland gorilla).